Consider the following 167-residue polypeptide: MPLALEGKKAIVAEVSEAAQDALSVVVADSRGVAVSAMTELRKQARENGVQVRVVRNTLARRALEGTPWECLNETFSGPTLLAFSYEHPGAAARLFKEFAKNEKDFEVKALAYEGEFIPASELDRLATLPTRDEAIAKLMSVMKEASAGKLVRTLAALRDQKQEEAA.

Belongs to the universal ribosomal protein uL10 family. Part of the ribosomal stalk of the 50S ribosomal subunit. The N-terminus interacts with L11 and the large rRNA to form the base of the stalk. The C-terminus forms an elongated spine to which L12 dimers bind in a sequential fashion forming a multimeric L10(L12)X complex.

In terms of biological role, forms part of the ribosomal stalk, playing a central role in the interaction of the ribosome with GTP-bound translation factors. The chain is Large ribosomal subunit protein uL10 from Chromohalobacter salexigens (strain ATCC BAA-138 / DSM 3043 / CIP 106854 / NCIMB 13768 / 1H11).